The following is a 446-amino-acid chain: Packaging protein 1 (446 aa).

The tract at residues 1 to 72 is disordered; that stretch reads MEEKAGLRHL…SQVSKSKKQR (72 aa). The segment covering 10–21 has biased composition (polar residues); the sequence is LQNQQNEPSQDP. Over residues 32 to 43 the composition is skewed to basic and acidic residues; the sequence is HSDRNHLNKEAE. 170–177 is a binding site for ATP; sequence GPTGCGKS. The segment at 439-446 is DNA-binding; that stretch reads RYYHSKKK.

The protein belongs to the adenoviridae packaging protein 1 family. As to quaternary structure, homodimer. Part of a genome packaging complex composed of packaging proteins 1, 2 and 3; this complex specifically binds to the packaging sequence on the left end of viral genomic DNA and performs packaging of the viral genome. Interacts with protein 33K.

It localises to the virion. Its subcellular location is the host nucleus. The protein localises to the host nucleoplasm. The protein resides in the host nucleolus. Its function is as follows. Component of the packaging machinery which encapsidates the viral DNA into preformed capsids and transcriptional activator of the viral major late promoter (MLP). Binds, along with packaging proteins 2 and 3, to the specific packaging sequence on the left end of viral genomic DNA and displays ATPase activity thereby providing the power stroke of the packaging machinery. The activity of packaging protein IVa2 is stimulated by protein 33K which acts as a terminase. May be the protein that pumps DNA into the capsid powered by ATP hydrolysis. Specifically binds to the 5'-CG-3' nucleotides of the repeats making up the packaging sequence. Component of the DEF-A and DEF-B transcription factors that bind downstream elements of the major late promoter (MLP), and stimulate transcription from the MLP after initiation of viral DNA replication. DEF-A is a heterodimer packaging proteins 1 and 2 and DEF-B is a homodimer of packaging protein 1. The chain is Packaging protein 1 from Canine adenovirus serotype 1 (strain CLL) (CAdV-1).